Here is a 208-residue protein sequence, read N- to C-terminus: Thymidylate kinase (208 aa).

9-16 lines the ATP pocket; that stretch reads GGEGCGKS.

This sequence belongs to the thymidylate kinase family.

It catalyses the reaction dTMP + ATP = dTDP + ADP. In terms of biological role, phosphorylation of dTMP to form dTDP in both de novo and salvage pathways of dTTP synthesis. The chain is Thymidylate kinase from Dehalococcoides mccartyi (strain CBDB1).